The chain runs to 510 residues: Zinc finger protein 692 (510 aa).

Disordered regions lie at residues 1–20 and 121–306; these read MAAS…RQLD and WGPS…EDTA. Position 161 is a phosphoserine (serine 161). A compositionally biased stretch (basic and acidic residues) spans 163–172; that stretch reads CDERAQEARM. A compositionally biased stretch (acidic residues) spans 188–201; it reads EDGEEEEEDEEEML. Serine 225 bears the Phosphoserine mark. The segment covering 237 to 265 has biased composition (low complexity); the sequence is APAPAAVPAPLASPSSSASSLGSGAPGPV. A compositionally biased stretch (polar residues) spans 278-297; sequence QADQQTEPLASPGSQAQSAL. 5 C2H2-type zinc fingers span residues 322-347, 353-377, 383-405, 411-433, and 442-465; these read LPCD…KYQH, FSCP…VKLH, YICE…RRIH, LQCE…RRKH, and FPCE…SKSH. Position 464 is a phosphoserine (serine 464).

Belongs to the krueppel C2H2-type zinc-finger protein family. In terms of processing, phosphorylation at Ser-464 results in loss of DNA-binding activity.

It is found in the nucleus. Its function is as follows. May act as an transcriptional repressor for PCK1 gene expression, in turn may participate in the hepatic gluconeogenesis regulation through the activated AMPK signaling pathway. The chain is Zinc finger protein 692 from Bos taurus (Bovine).